The following is a 173-amino-acid chain: RNA pyrophosphohydrolase (173 aa).

In terms of domain architecture, Nudix hydrolase spans 6-149; sequence GFRANVGIII…KRDVYRKVMK (144 aa). Positions 38-59 match the Nudix box motif; the sequence is GGVDDGETPEEAMYRELYEEVG.

It belongs to the Nudix hydrolase family. RppH subfamily. A divalent metal cation serves as cofactor.

Functionally, accelerates the degradation of transcripts by removing pyrophosphate from the 5'-end of triphosphorylated RNA, leading to a more labile monophosphorylated state that can stimulate subsequent ribonuclease cleavage. The polypeptide is RNA pyrophosphohydrolase (Shewanella woodyi (strain ATCC 51908 / MS32)).